Consider the following 155-residue polypeptide: 6,7-dimethyl-8-ribityllumazine synthase (155 aa).

5-amino-6-(D-ribitylamino)uracil-binding positions include tryptophan 23, 57–59 (AWE), and 81–83 (CVI). (2S)-2-hydroxy-3-oxobutyl phosphate is bound at residue 86–87 (DT). Histidine 89 (proton donor) is an active-site residue. Asparagine 114 is a binding site for 5-amino-6-(D-ribitylamino)uracil. Arginine 128 provides a ligand contact to (2S)-2-hydroxy-3-oxobutyl phosphate.

It belongs to the DMRL synthase family. In terms of assembly, forms an icosahedral capsid composed of 60 subunits, arranged as a dodecamer of pentamers.

The catalysed reaction is (2S)-2-hydroxy-3-oxobutyl phosphate + 5-amino-6-(D-ribitylamino)uracil = 6,7-dimethyl-8-(1-D-ribityl)lumazine + phosphate + 2 H2O + H(+). Its pathway is cofactor biosynthesis; riboflavin biosynthesis; riboflavin from 2-hydroxy-3-oxobutyl phosphate and 5-amino-6-(D-ribitylamino)uracil: step 1/2. In terms of biological role, catalyzes the formation of 6,7-dimethyl-8-ribityllumazine by condensation of 5-amino-6-(D-ribitylamino)uracil with 3,4-dihydroxy-2-butanone 4-phosphate. This is the penultimate step in the biosynthesis of riboflavin. The sequence is that of 6,7-dimethyl-8-ribityllumazine synthase from Stenotrophomonas maltophilia (strain K279a).